A 206-amino-acid chain; its full sequence is 3-isopropylmalate dehydratase small subunit (206 aa).

The protein belongs to the LeuD family. LeuD type 1 subfamily. Heterodimer of LeuC and LeuD.

It catalyses the reaction (2R,3S)-3-isopropylmalate = (2S)-2-isopropylmalate. The protein operates within amino-acid biosynthesis; L-leucine biosynthesis; L-leucine from 3-methyl-2-oxobutanoate: step 2/4. Its function is as follows. Catalyzes the isomerization between 2-isopropylmalate and 3-isopropylmalate, via the formation of 2-isopropylmaleate. This chain is 3-isopropylmalate dehydratase small subunit, found in Leptospira borgpetersenii serovar Hardjo-bovis (strain L550).